Reading from the N-terminus, the 122-residue chain is MRHRNGNRKLNRTSSHRAAMLRNMANSLLTHETIVTTLPKAKELRRVVEPLITLGKKPSLASRRLAFDRTRDRDVVVKLFGDLGPRFTARNGGYVRVLKYGFRKGDNAPLALVELVDKPAAE.

It belongs to the bacterial ribosomal protein bL17 family. As to quaternary structure, part of the 50S ribosomal subunit. Contacts protein L32.

This Neisseria gonorrhoeae (strain ATCC 700825 / FA 1090) protein is Large ribosomal subunit protein bL17.